The following is a 341-amino-acid chain: tRNA N6-adenosine threonylcarbamoyltransferase (341 aa).

2 residues coordinate Fe cation: histidine 111 and histidine 115. Residues 134–138, aspartate 167, glycine 180, and asparagine 276 each bind substrate; that span reads LVSGG. A Fe cation-binding site is contributed by aspartate 304.

This sequence belongs to the KAE1 / TsaD family. The cofactor is Fe(2+).

It is found in the cytoplasm. It catalyses the reaction L-threonylcarbamoyladenylate + adenosine(37) in tRNA = N(6)-L-threonylcarbamoyladenosine(37) in tRNA + AMP + H(+). Required for the formation of a threonylcarbamoyl group on adenosine at position 37 (t(6)A37) in tRNAs that read codons beginning with adenine. Is involved in the transfer of the threonylcarbamoyl moiety of threonylcarbamoyl-AMP (TC-AMP) to the N6 group of A37, together with TsaE and TsaB. TsaD likely plays a direct catalytic role in this reaction. The chain is tRNA N6-adenosine threonylcarbamoyltransferase from Pseudomonas aeruginosa (strain LESB58).